The sequence spans 308 residues: Mycothiol acetyltransferase (308 aa).

N-acetyltransferase domains follow at residues 16–152 (ETLA…RPLA) and 165–308 (VTVR…RTES). Glu47 contacts 1D-myo-inositol 2-(L-cysteinylamino)-2-deoxy-alpha-D-glucopyranoside. Acetyl-CoA is bound at residue 91-93 (LVV). Residues Glu192, Lys231, and Glu240 each coordinate 1D-myo-inositol 2-(L-cysteinylamino)-2-deoxy-alpha-D-glucopyranoside. Residues 244-246 (LGV) and 251-257 (QGGGLGK) each bind acetyl-CoA. 1D-myo-inositol 2-(L-cysteinylamino)-2-deoxy-alpha-D-glucopyranoside is bound at residue Tyr278.

Belongs to the acetyltransferase family. MshD subfamily. Monomer.

It catalyses the reaction 1D-myo-inositol 2-(L-cysteinylamino)-2-deoxy-alpha-D-glucopyranoside + acetyl-CoA = mycothiol + CoA + H(+). Its function is as follows. Catalyzes the transfer of acetyl from acetyl-CoA to desacetylmycothiol (Cys-GlcN-Ins) to form mycothiol. The protein is Mycothiol acetyltransferase of Streptomyces avermitilis (strain ATCC 31267 / DSM 46492 / JCM 5070 / NBRC 14893 / NCIMB 12804 / NRRL 8165 / MA-4680).